The sequence spans 428 residues: GTPase Obg (428 aa).

The 158-residue stretch at 1-158 (MFVDQVKIYV…RYIVLELKVL (158 aa)) folds into the Obg domain. A disordered region spans residues 118 to 143 (KGGRGGRGNTRFATPANPAPQLSENG). The 171-residue stretch at 159–329 (ADVGLVGFPS…LLFEIADRLE (171 aa)) folds into the OBG-type G domain. Residues 165 to 172 (GFPSVGKS), 190 to 194 (FTTLN), 212 to 215 (DLPG), 282 to 285 (NKMD), and 310 to 312 (SAV) each bind GTP. Residues Ser-172 and Thr-192 each contribute to the Mg(2+) site. In terms of domain architecture, OCT spans 350-428 (KLEDEEAPFE…LLEFEFEFID (79 aa)).

Belongs to the TRAFAC class OBG-HflX-like GTPase superfamily. OBG GTPase family. Monomer. It depends on Mg(2+) as a cofactor.

The protein localises to the cytoplasm. An essential GTPase which binds GTP, GDP and possibly (p)ppGpp with moderate affinity, with high nucleotide exchange rates and a fairly low GTP hydrolysis rate. Plays a role in control of the cell cycle, stress response, ribosome biogenesis and in those bacteria that undergo differentiation, in morphogenesis control. In Bacillus licheniformis (strain ATCC 14580 / DSM 13 / JCM 2505 / CCUG 7422 / NBRC 12200 / NCIMB 9375 / NCTC 10341 / NRRL NRS-1264 / Gibson 46), this protein is GTPase Obg.